The following is a 334-amino-acid chain: Fructose-1,6-bisphosphatase class 1 (334 aa).

Mg(2+)-binding residues include Glu93, Asp117, Leu119, and Asp120. Residues 120–123, Asn213, Tyr244, and Lys274 contribute to the substrate site; that span reads DGSS. Glu280 contributes to the Mg(2+) binding site.

It belongs to the FBPase class 1 family. In terms of assembly, homotetramer. Requires Mg(2+) as cofactor.

It localises to the cytoplasm. It carries out the reaction beta-D-fructose 1,6-bisphosphate + H2O = beta-D-fructose 6-phosphate + phosphate. The protein operates within carbohydrate biosynthesis; gluconeogenesis. The sequence is that of Fructose-1,6-bisphosphatase class 1 from Flavobacterium johnsoniae (strain ATCC 17061 / DSM 2064 / JCM 8514 / BCRC 14874 / CCUG 350202 / NBRC 14942 / NCIMB 11054 / UW101) (Cytophaga johnsonae).